Consider the following 296-residue polypeptide: Arginase (296 aa).

Residues histidine 98, aspartate 124, histidine 126, and aspartate 128 each contribute to the Mn(2+) site. L-arginine-binding residues include asparagine 130, serine 137, and aspartate 178. The Mn(2+) site is built by aspartate 225 and aspartate 227. Residues aspartate 227 and threonine 239 each contribute to the L-arginine site.

The protein belongs to the arginase family. Monomer. Homodimer; dimerization is dispensable for catalytic activity. Mn(2+) is required as a cofactor.

The enzyme catalyses L-arginine + H2O = urea + L-ornithine. Its pathway is nitrogen metabolism; urea cycle; L-ornithine and urea from L-arginine: step 1/1. With respect to regulation, substitution of the loosely bound surface exposed Mn(2+) with Mg(2+), Zn(2+), Ni(2+) or Co(2+) results in similar catalytic activity, substitution with Cd(2+) and Cu(2+) reduces catalytic activity and substitution with Hg(2+) and Ca(2+) inhibits the enzyme. Inhibited by L-norvaline. Its function is as follows. Catalyzes the hydrolysis of L-arginine into urea and L-ornithine, which is a precursor for polyamine biosynthesis. By depleting host L-arginine, a substrate for nitric oxide synthase (NOS), prevents the production of nitric oxide (NO) by host activated macrophages, and thus allows the parasite to evade host immune response. The polypeptide is Arginase (Entamoeba histolytica (strain ATCC 30459 / HM-1:IMSS / ABRM)).